Reading from the N-terminus, the 363-residue chain is MNFLHSTLDRLREFTPVSNTSTFRTNGQITPEEFVAAGDYLVFKFPTWSWADASPTSKRANYLPAGKQFLVTRGVPCHRRLDDDFAGDAGHDETVVRDGEDFRGDGPHSPGDDEDGWLRTGGLAASQEARVRDVRTVDESGEMGEREDDEDDIPDMEDDDDDDEAIIRDPKADNASSSRRTYTIYIAYTPYYRTPRLYLSGYLSSSQPLPPHLMMEDIVGDYKDKTVTLEDFPYFSNNIKMASIHPCKHASVMKTLLDRADAALKLRREKQRQGKAVPGSKDTGMEGLVDDFEKTKIGDKKAVLEGLKAGGNGNDEWEVLQHDQDFANEEEEVAIRVDQYLVVFLKFMASVTPGIEHDFTMGV.

Basic and acidic residues-rich tracts occupy residues 84-106 (DFAG…RGDG) and 129-138 (ARVRDVRTVD). A flexible region region spans residues 84–171 (DFAGDAGHDE…DDEAIIRDPK (88 aa)). A disordered region spans residues 84-174 (DFAGDAGHDE…AIIRDPKADN (91 aa)). Acidic residues predominate over residues 139-164 (ESGEMGEREDDEDDIPDMEDDDDDDE). Cys-247 acts as the Glycyl thioester intermediate in catalysis. Residues 251–339 (SVMKTLLDRA…EEEVAIRVDQ (89 aa)) form a handle region region.

The protein belongs to the ATG3 family. As to quaternary structure, monomer. Interacts with atg8 through an intermediate thioester bond through the C-terminal Gly of atg8. Interacts with the C-terminal region of the E1-like atg7 enzyme. Also interacts with the atg12-atg5 conjugate.

The protein localises to the cytoplasm. E2 conjugating enzyme required for the cytoplasm to vacuole transport (Cvt) and autophagy. Required for selective autophagic degradation of the nucleus (nucleophagy) as well as for mitophagy which contributes to regulate mitochondrial quantity and quality by eliminating the mitochondria to a basal level to fulfill cellular energy requirements and preventing excess ROS production. Responsible for the E2-like covalent binding of phosphatidylethanolamine to the C-terminal Gly of atg8. The atg12-atg5 conjugate plays a role of an E3 and promotes the transfer of atg8 from atg3 to phosphatidylethanolamine (PE). This step is required for the membrane association of atg8. The formation of the atg8-phosphatidylethanolamine conjugate is essential for autophagy and for the cytoplasm to vacuole transport (Cvt). The atg8-PE conjugate mediates tethering between adjacent membranes and stimulates membrane hemifusion, leading to expansion of the autophagosomal membrane during autophagy. Required for normal mycelial growth and conidiogenesis, and regulates sclerotial formation. Plays an essential role in pathogenesis. This Botryotinia fuckeliana (strain BcDW1) (Noble rot fungus) protein is Autophagy-related protein 3.